The following is a 278-amino-acid chain: Transmembrane protein 45B (278 aa).

Transmembrane regions (helical) follow at residues 7 to 27, 49 to 69, 95 to 115, 117 to 137, 149 to 169, 183 to 203, and 215 to 235; these read HALP…KYPL, IIEG…EQFV, YLFF…FHIV, LGLD…LFYF, IHSL…LEVI, LLIL…PPFG, and IMFI…IVAI. Phosphoserine occurs at positions 273 and 275.

This sequence belongs to the TMEM45 family.

It localises to the endosome membrane. The protein resides in the lysosome membrane. The protein localises to the golgi apparatus. Its subcellular location is the trans-Golgi network membrane. Plays a role in innate immunity. The polypeptide is Transmembrane protein 45B (Tmem45b) (Mus musculus (Mouse)).